The sequence spans 825 residues: Phenylalanine--tRNA ligase beta subunit (825 aa).

One can recognise a tRNA-binding domain in the interval 39–154 (RTWADGVVLG…EAHPLGSDVR (116 aa)). One can recognise a B5 domain in the interval 411 to 506 (PLERTLKLRL…RLYGYDRFSE (96 aa)). 4 residues coordinate Mg(2+): D484, D490, E493, and E494. Positions 731-824 (SPFPAADRDI…LATQFPVTLR (94 aa)) constitute an FDX-ACB domain.

Belongs to the phenylalanyl-tRNA synthetase beta subunit family. Type 1 subfamily. Tetramer of two alpha and two beta subunits. Requires Mg(2+) as cofactor.

The protein localises to the cytoplasm. The catalysed reaction is tRNA(Phe) + L-phenylalanine + ATP = L-phenylalanyl-tRNA(Phe) + AMP + diphosphate + H(+). The chain is Phenylalanine--tRNA ligase beta subunit from Synechococcus sp. (strain JA-2-3B'a(2-13)) (Cyanobacteria bacterium Yellowstone B-Prime).